Consider the following 106-residue polypeptide: Replication restart protein PriB (106 aa).

Residues 4 to 103 (TNRLVLSGTV…LHAEQIEFID (100 aa)) form the SSB domain.

Belongs to the PriB family. Homodimer. Interacts with PriA and DnaT. Component of the replication restart primosome. Primosome assembly occurs via a 'hand-off' mechanism. PriA binds to replication forks, subsequently PriB then DnaT bind; DnaT then displaces ssDNA to generate the helicase loading substrate.

Involved in the restart of stalled replication forks, which reloads the replicative helicase on sites other than the origin of replication; the PriA-PriB pathway is the major replication restart pathway. During primosome assembly it facilitates complex formation between PriA and DnaT on DNA; stabilizes PriA on DNA. Stimulates the DNA unwinding activity of PriA helicase. The polypeptide is Replication restart protein PriB (Yersinia pestis).